The sequence spans 72 residues: Translation initiation factor IF-1 (72 aa).

The S1-like domain occupies 1–72; that stretch reads MAKEDNIEMQ…SKGRIVFRAR (72 aa).

The protein belongs to the IF-1 family. In terms of assembly, component of the 30S ribosomal translation pre-initiation complex which assembles on the 30S ribosome in the order IF-2 and IF-3, IF-1 and N-formylmethionyl-tRNA(fMet); mRNA recruitment can occur at any time during PIC assembly.

Its subcellular location is the cytoplasm. In terms of biological role, one of the essential components for the initiation of protein synthesis. Stabilizes the binding of IF-2 and IF-3 on the 30S subunit to which N-formylmethionyl-tRNA(fMet) subsequently binds. Helps modulate mRNA selection, yielding the 30S pre-initiation complex (PIC). Upon addition of the 50S ribosomal subunit IF-1, IF-2 and IF-3 are released leaving the mature 70S translation initiation complex. The polypeptide is Translation initiation factor IF-1 (Shewanella frigidimarina (strain NCIMB 400)).